We begin with the raw amino-acid sequence, 290 residues long: MRGFVYVLVCVLALASFSRAQLPGGGGPVLPGGGPTIGPVNPDPTRTEVCAKFWVQEGNSCYLFDSGAFLRQVAASRPVVVNNENGLFQAAANMYCGQMHPNASLVTVNSLAENNFLYEWAVRMMVEPEPVWIGLHAGPMGQWQWYSGEPVTYTNWERMTAPMAEPGLGAMIFDADIIAQMFNNQVEITPQWVPEQAINDRHALICEYHPSGMTAAAAAATNAPTFPPMATAPPMAATTRGPVMFQNNPRNLVNSLTGGRFGGSLLHEIPRRQRMRPSNYRKNPYFGIQP.

Residues 1–20 (MRGFVYVLVCVLALASFSRA) form the signal peptide. The C-type lectin domain occupies 92–162 (ANMYCGQMHP…YTNWERMTAP (71 aa)). Asn-102 is a glycosylation site (N-linked (GlcNAc...) asparagine).

As to expression, accumulates exclusively in mineralized tissues.

Its function is as follows. Matrix protein of the sea urchin embryo spicule. The function of the matrix proteins is to direct crystal growth in certain orientations and inhibit growth in others. The polypeptide is 30 kDa spicule matrix protein alpha (SM30A) (Strongylocentrotus purpuratus (Purple sea urchin)).